The chain runs to 465 residues: CUGBP Elav-like family member 3 (465 aa).

RRM domains lie at 7 to 88 and 95 to 175; these read IKLF…PADS and RKLF…FADT. A compositionally biased stretch (pro residues) spans 346 to 359; that stretch reads PPALVAQQPPPPPQ. The tract at residues 346-379 is disordered; the sequence is PPALVAQQPPPPPQQQQQQQQQQQQQQQREGPDG. Positions 360-373 are enriched in low complexity; the sequence is QQQQQQQQQQQQQQ. Residues 380–458 enclose the RRM 3 domain; that stretch reads CNIFIYHLPQ…KRLKVQLKRP (79 aa).

Belongs to the CELF/BRUNOL family. In terms of tissue distribution, expressed in brain.

Its subcellular location is the nucleus. The protein resides in the cytoplasm. In terms of biological role, RNA-binding protein involved in the regulation of pre-mRNA alternative splicing. Mediates exon inclusion and/or exclusion in pre-mRNA that are subject to tissue-specific and developmentally regulated alternative splicing. Specifically activates exon 5 inclusion of cardiac isoforms of TNNT2 during heart remodeling at the juvenile to adult transition. Activates the splicing of MAPT/Tau exon 10. Binds to muscle-specific splicing enhancer (MSE) intronic sites flanking the alternative exon 5 of TNNT2 pre-mRNA. This Homo sapiens (Human) protein is CUGBP Elav-like family member 3 (CELF3).